The chain runs to 145 residues: Large ribosomal subunit protein uL13 (145 aa).

Belongs to the universal ribosomal protein uL13 family. Part of the 50S ribosomal subunit.

Functionally, this protein is one of the early assembly proteins of the 50S ribosomal subunit, although it is not seen to bind rRNA by itself. It is important during the early stages of 50S assembly. The protein is Large ribosomal subunit protein uL13 of Bacillus velezensis (strain DSM 23117 / BGSC 10A6 / LMG 26770 / FZB42) (Bacillus amyloliquefaciens subsp. plantarum).